The following is a 276-amino-acid chain: Protein HemX (276 aa).

8 helical membrane-spanning segments follow: residues 9-29 (LNEGTIVIYALSVLFYFIDFL), 40-60 (FWLLSIVWTLQTVYLAYFMWV), 66-86 (VLNVTEALYFYAWVLVTLSLV), 93-113 (VDFIVFFTNVIGFSMIAIHTF), 132-152 (LVIHITMAILSYGAFSLSFVF), 187-207 (VLNVIGVPMLLLSLILGVIWA), 217-237 (FDAKVLGSFVVLLLYSYYLYI), and 247-267 (VAALWNTACFLVLMINYFLLG).

To M.leprae U1620K.

The protein localises to the cell membrane. Its function is as follows. Required for HemL synthesis. The chain is Protein HemX (hemX) from Bacillus subtilis (strain 168).